Reading from the N-terminus, the 207-residue chain is Large ribosomal subunit protein uL4 (207 aa).

Residues 53 to 76 form a disordered region; the sequence is TVSEVSGTTKKPFKQKGTGNARQG.

Belongs to the universal ribosomal protein uL4 family. As to quaternary structure, part of the 50S ribosomal subunit.

In terms of biological role, one of the primary rRNA binding proteins, this protein initially binds near the 5'-end of the 23S rRNA. It is important during the early stages of 50S assembly. It makes multiple contacts with different domains of the 23S rRNA in the assembled 50S subunit and ribosome. Its function is as follows. Forms part of the polypeptide exit tunnel. The chain is Large ribosomal subunit protein uL4 from Rickettsia bellii (strain OSU 85-389).